The sequence spans 355 residues: Heterogeneous nuclear ribonucleoprotein D0 (355 aa).

Positions 1 to 92 are disordered; it reads MSEEQFGGDG…SPRHSEAATA (92 aa). Serine 2 carries the post-translational modification N-acetylserine. Composition is skewed to low complexity over residues 11 to 20 and 27 to 42; these read AAAAATAAVG and EGAM…AAAG. Over residues 43 to 58 the composition is skewed to gly residues; it reads SGAGTGGGTASGGTEG. Over residues 64–73 the composition is skewed to basic and acidic residues; the sequence is EGAKIDASKN. Serine 71 is modified (phosphoserine). Lysine 72 participates in a covalent cross-link: Glycyl lysine isopeptide (Lys-Gly) (interchain with G-Cter in SUMO2). Residues serine 80, serine 82, and serine 83 each carry the phosphoserine modification. Threonine 91 is modified (phosphothreonine). 2 consecutive RRM domains span residues 97–179 and 182–261; these read WKMF…KTKE and KKIF…MSKE. Lysine 119 carries the N6-methyllysine modification. Threonine 127 is modified (phosphothreonine). Residue lysine 129 forms a Glycyl lysine isopeptide (Lys-Gly) (interchain with G-Cter in SUMO2) linkage. Residue lysine 165 is modified to N6-acetyllysine. Residue serine 190 is modified to Phosphoserine. Residue threonine 193 is modified to Phosphothreonine. Residue lysine 197 forms a Glycyl lysine isopeptide (Lys-Gly) (interchain with G-Cter in SUMO2) linkage. 2 positions are modified to N6-acetyllysine: lysine 243 and lysine 251. Tyrosine 263 bears the Omega-N-methylarginine mark. Serine 271 carries the post-translational modification Phosphoserine. Arginine 272 carries the omega-N-methylarginine modification. Glycine 273 is modified (N6-acetyllysine). An omega-N-methylarginine mark is found at arginine 278, arginine 280, and arginine 282. N6-acetyllysine is present on glutamine 292. An Asymmetric dimethylarginine; alternate modification is found at arginine 345. The residue at position 345 (arginine 345) is a Dimethylated arginine; alternate. Arginine 345 carries the omega-N-methylarginine; alternate modification.

In terms of assembly, identified in a IGF2BP1-dependent mRNP granule complex containing untranslated mRNAs. Part of a complex associated with the FOS mCRD domain and consisting of PABPC1, PAIP1, CSDE1/UNR and SYNCRIP. Interacts with IGF2BP2. Interacts with GTPBP1. Interacts with EIF4G1; the interaction requires RNA. Interacts with EIF3B and RPS3. Arg-345 is dimethylated, probably to asymmetric dimethylarginine. In terms of processing, methylated by PRMT1, in an insulin-dependent manner. The PRMT1-mediated methylation regulates tyrosine phosphorylation.

The protein resides in the nucleus. Its subcellular location is the cytoplasm. In terms of biological role, binds with high affinity to RNA molecules that contain AU-rich elements (AREs) found within the 3'-UTR of many proto-oncogenes and cytokine mRNAs. Also binds to double- and single-stranded DNA sequences in a specific manner and functions a transcription factor. Each of the RNA-binding domains specifically can bind solely to a single-stranded non-monotonous 5'-UUAG-3' sequence and also weaker to the single-stranded 5'-TTAGGG-3' telomeric DNA repeat. Binds RNA oligonucleotides with 5'-UUAGGG-3' repeats more tightly than the telomeric single-stranded DNA 5'-TTAGGG-3' repeats. Binding of RRM1 to DNA inhibits the formation of DNA quadruplex structure which may play a role in telomere elongation. May be involved in translationally coupled mRNA turnover. Implicated with other RNA-binding proteins in the cytoplasmic deadenylation/translational and decay interplay of the FOS mRNA mediated by the major coding-region determinant of instability (mCRD) domain. May play a role in the regulation of the rhythmic expression of circadian clock core genes. Directly binds to the 3'UTR of CRY1 mRNA and induces CRY1 rhythmic translation. May also be involved in the regulation of PER2 translation. This is Heterogeneous nuclear ribonucleoprotein D0 (HNRNPD) from Homo sapiens (Human).